A 700-amino-acid polypeptide reads, in one-letter code: Elongation factor G (700 aa).

Positions 8–290 (ERYRNIGISA…AVVEYLPSPV (283 aa)) constitute a tr-type G domain. GTP is bound by residues 17-24 (AHIDAGKT), 88-92 (DTPGH), and 142-145 (NKMD).

The protein belongs to the TRAFAC class translation factor GTPase superfamily. Classic translation factor GTPase family. EF-G/EF-2 subfamily.

It localises to the cytoplasm. Its function is as follows. Catalyzes the GTP-dependent ribosomal translocation step during translation elongation. During this step, the ribosome changes from the pre-translocational (PRE) to the post-translocational (POST) state as the newly formed A-site-bound peptidyl-tRNA and P-site-bound deacylated tRNA move to the P and E sites, respectively. Catalyzes the coordinated movement of the two tRNA molecules, the mRNA and conformational changes in the ribosome. The protein is Elongation factor G of Mannheimia succiniciproducens (strain KCTC 0769BP / MBEL55E).